A 389-amino-acid chain; its full sequence is Protein IQ-domain 26 (389 aa).

IQ domains lie at glutamate 106 to lysine 134 and leucine 135 to alanine 157. The calmodulin-binding stretch occupies residues alanine 137–threonine 151. The tract at residues serine 347 to tyrosine 374 is disordered.

The protein belongs to the IQD family. In terms of assembly, binds to multiple calmodulin (CaM) in the presence of Ca(2+) and CaM-like proteins.

The protein localises to the cell membrane. Its subcellular location is the cytoplasm. It is found in the cytoskeleton. Functionally, may be involved in cooperative interactions with calmodulins or calmodulin-like proteins. Recruits calmodulin proteins to microtubules, thus being a potential scaffold in cellular signaling and trafficking. May associate with nucleic acids and regulate gene expression at the transcriptional or post-transcriptional level. The protein is Protein IQ-domain 26 of Arabidopsis thaliana (Mouse-ear cress).